We begin with the raw amino-acid sequence, 288 residues long: MSQFSFTKMHGLGNSYIYVNMFEEHIPEEELALVAEKVSNRNTGIGADGMILICPSEVAPVKMRMFNNDGSEGKSCGNGLRCVAKYAYEHKLVEETIFTIETLAGIVTAEVTVENDIVTLVKIDMGAPRLTRAELPMLGEGETPFIREDFLFHNQRYAFTAVSMGNPHAVIFVDDVEKAPLTTLGPVLENHEMFPERVNVEFIEILNETEMNFRVWERGSGVTQACGTGACASVVAAILNGKMERGKEITVHLAGGDLMITWTEEGTVMMKGPAEVICHGVYEYKIEA.

Asn-14 and Asn-67 together coordinate substrate. The active-site Proton donor is the Cys-76. Substrate is bound by residues 77-78 (GN), Asn-166, Asn-199, and 217-218 (ER). Cys-226 (proton acceptor) is an active-site residue. Residue 227 to 228 (GT) coordinates substrate.

Belongs to the diaminopimelate epimerase family. In terms of assembly, homodimer.

It localises to the cytoplasm. The catalysed reaction is (2S,6S)-2,6-diaminopimelate = meso-2,6-diaminopimelate. It participates in amino-acid biosynthesis; L-lysine biosynthesis via DAP pathway; DL-2,6-diaminopimelate from LL-2,6-diaminopimelate: step 1/1. Catalyzes the stereoinversion of LL-2,6-diaminopimelate (L,L-DAP) to meso-diaminopimelate (meso-DAP), a precursor of L-lysine and an essential component of the bacterial peptidoglycan. The sequence is that of Diaminopimelate epimerase from Bacillus cytotoxicus (strain DSM 22905 / CIP 110041 / 391-98 / NVH 391-98).